Here is a 132-residue protein sequence, read N- to C-terminus: Small ribosomal subunit protein uS11 (132 aa).

Belongs to the universal ribosomal protein uS11 family. In terms of assembly, part of the 30S ribosomal subunit.

Its function is as follows. Located on the platform of the 30S subunit. In Sulfolobus acidocaldarius (strain ATCC 33909 / DSM 639 / JCM 8929 / NBRC 15157 / NCIMB 11770), this protein is Small ribosomal subunit protein uS11.